The chain runs to 304 residues: GMP synthase [glutamine-hydrolyzing] subunit B (304 aa).

Residues Val-2–Arg-183 form the GMPS ATP-PPase domain. An ATP-binding site is contributed by Ser-28–Ser-34.

As to quaternary structure, heterodimer composed of a glutamine amidotransferase subunit (A) and a GMP-binding subunit (B).

The enzyme catalyses XMP + L-glutamine + ATP + H2O = GMP + L-glutamate + AMP + diphosphate + 2 H(+). Its pathway is purine metabolism; GMP biosynthesis; GMP from XMP (L-Gln route): step 1/1. Functionally, catalyzes the synthesis of GMP from XMP. This is GMP synthase [glutamine-hydrolyzing] subunit B from Methanococcoides burtonii (strain DSM 6242 / NBRC 107633 / OCM 468 / ACE-M).